Here is a 215-residue protein sequence, read N- to C-terminus: MATERHYSPLDRLLLQADTAMRTLLPFSGQPARPSPAIIQPDADLDEQQSRHIAGLMRINHTGEVCAQALYQGQALTAKLPEVRKAMEHAAEEEIDHLAWCEQRIRQLNSHPSVLNPLFYGMSFGIGALAGLVSDKVSLGFVAATEHQVCKHLDEHLEQIPHEDEKSRAILEQMRIDEEQHAESALEAGGYRFPAPVRFGMSLLAKVMTKSTYRI.

Positions 64, 94, 97, 146, 178, and 181 each coordinate Fe cation.

It belongs to the COQ7 family. Requires Fe cation as cofactor.

It localises to the cell membrane. The catalysed reaction is a 5-methoxy-2-methyl-3-(all-trans-polyprenyl)benzene-1,4-diol + AH2 + O2 = a 3-demethylubiquinol + A + H2O. It functions in the pathway cofactor biosynthesis; ubiquinone biosynthesis. Catalyzes the hydroxylation of 2-nonaprenyl-3-methyl-6-methoxy-1,4-benzoquinol during ubiquinone biosynthesis. In Pseudomonas putida (strain GB-1), this protein is 3-demethoxyubiquinol 3-hydroxylase.